The primary structure comprises 639 residues: 2-oxoacid:ferredoxin oxidoreductase 1, subunit alpha (639 aa).

Positions 266–270 (YPITP) match the YPITP motif motif. Substrate-binding residues include Thr269 and Arg352.

As to quaternary structure, heterodimer composed of an alpha and a beta subunit.

The enzyme catalyses a 2-oxocarboxylate + 2 oxidized [2Fe-2S]-[ferredoxin] + CoA = an acyl-CoA + 2 reduced [2Fe-2S]-[ferredoxin] + CO2 + H(+). Functionally, catalyzes the coenzyme A-dependent oxidative decarboxylation of different 2-oxoacids such as pyruvate, 2-oxobutyrate and glyoxylate to form their CoA derivatives. The protein is 2-oxoacid:ferredoxin oxidoreductase 1, subunit alpha of Aeropyrum pernix (strain ATCC 700893 / DSM 11879 / JCM 9820 / NBRC 100138 / K1).